The chain runs to 204 residues: Urease accessory protein UreG (204 aa).

12-19 (GPVGSGKT) is a binding site for GTP.

It belongs to the SIMIBI class G3E GTPase family. UreG subfamily. In terms of assembly, homodimer. UreD, UreF and UreG form a complex that acts as a GTP-hydrolysis-dependent molecular chaperone, activating the urease apoprotein by helping to assemble the nickel containing metallocenter of UreC. The UreE protein probably delivers the nickel.

Its subcellular location is the cytoplasm. Its function is as follows. Facilitates the functional incorporation of the urease nickel metallocenter. This process requires GTP hydrolysis, probably effectuated by UreG. This chain is Urease accessory protein UreG, found in Pseudomonas fluorescens (strain ATCC BAA-477 / NRRL B-23932 / Pf-5).